Reading from the N-terminus, the 143-residue chain is MDFEKIRKWLEITNEYKQSDFWTNVLKYKAPEHFFDSEASTFVYDFYQDEEYNFIIVEMPGVYEEELTIRLLSKTQLLIKGTITPVFPAEMEVLRERYYGEIERIIQLPEAAETHLLQIQLLNGLLHISYPRQVETVAFNKGL.

A sHSP domain is found at 34 to 143; the sequence is FFDSEASTFV…VETVAFNKGL (110 aa).

Belongs to the small heat shock protein (HSP20) family.

This Bacillus subtilis (strain 168) protein is Spore coat protein P (cotP).